We begin with the raw amino-acid sequence, 143 residues long: Transcriptional regulator MraZ (143 aa).

SpoVT-AbrB domains follow at residues 5–47 (EYHH…PMQG) and 76–119 (ATEC…SRSR).

The protein belongs to the MraZ family. Forms oligomers.

It is found in the cytoplasm. Its subcellular location is the nucleoid. The chain is Transcriptional regulator MraZ from Moorella thermoacetica (strain ATCC 39073 / JCM 9320).